Reading from the N-terminus, the 297-residue chain is Oxidoreductase R1 (297 aa).

This sequence belongs to the asaB hydroxylase/desaturase family.

It functions in the pathway secondary metabolite biosynthesis. Functionally, oxidoreductase; part of the gene cluster that mediates the biosynthesis of squalestatin S1 (SQS1, also known as zaragozic acid A), a heavily oxidized fungal polyketide that offers potent cholesterol lowering activity by targeting squalene synthase (SS). SQS1 is composed of a 2,8-dioxobicyclic[3.2.1]octane-3,4,5-tricarboxyclic acid core that is connected to two lipophilic polyketide arms. These initial steps feature the priming of an unusual benzoic acid starter unit onto the highly reducing polyketide synthase pks2, followed by oxaloacetate extension and product release to generate a tricarboxylic acid containing product. The phenylalanine ammonia lyase (PAL) M7 and the acyl-CoA ligase M9 are involved in transforming phenylalanine into benzoyl-CoA. The citrate synthase-like protein R3 is involved in connecting the C-alpha-carbons of the hexaketide chain and oxaloacetate to afford the tricarboxylic acid unit. The potential hydrolytic enzymes, M8 and M10, are in close proximity to pks2 and may participate in product release. On the other side, the tetraketide arm is synthesized by a the squalestatin tetraketide synthase pks1 and enzymatically esterified to the core in the last biosynthetic step, by the acetyltransferase M4. The biosynthesis of the tetraketide must involve 3 rounds of chain extension. After the first and second rounds methyl-transfer occurs, and in all rounds of extension the ketoreductase and dehydratase are active. The enoyl reductase and C-MeT of pks1 are not active in the final round of extension. The acetyltransferase M4 appears to have a broad substrate selectivity for its acyl CoA substrate, allowing the in vitro synthesis of novel squalestatins. The biosynthesis of SQS1 requires several oxidative steps likely performed by oxidoreductases M1, R1 and R2. Finally, in support of the identification of the cluster as being responsible for SQS1 production, the cluster contains a gene encoding a putative squalene synthase (SS) R6, suggesting a likely mechanism for self-resistance. The chain is Oxidoreductase R1 from Phoma sp. (strain ATCC 20986 / MF5453).